The chain runs to 296 residues: Diguanylate cyclase DgcS (296 aa).

Residues 165–293 form the GGDEF domain; that stretch reads GSVSLIVLDL…GRNCYKLSPT (129 aa). Mg(2+) is bound by residues D173, L174, and D216. The active site involves D216.

It depends on Mg(2+) as a cofactor.

The catalysed reaction is 2 GTP = 3',3'-c-di-GMP + 2 diphosphate. In terms of biological role, catalyzes the synthesis of cyclic-di-GMP (c-di-GMP) via the condensation of 2 GTP molecules. May be involved in the regulation of formation of solid surface-associated biofilms and pellicles according to environmental conditions. The sequence is that of Diguanylate cyclase DgcS from Shewanella oneidensis (strain ATCC 700550 / JCM 31522 / CIP 106686 / LMG 19005 / NCIMB 14063 / MR-1).